A 146-amino-acid chain; its full sequence is uncharacterized protein (146 aa).

In terms of domain architecture, N-acetyltransferase spans 7–146 (LDINYKTDEL…DGHDVLVWTP (140 aa)).

This is an uncharacterized protein from Staphylococcus saprophyticus subsp. saprophyticus (strain ATCC 15305 / DSM 20229 / NCIMB 8711 / NCTC 7292 / S-41).